The chain runs to 355 residues: tRNA-specific 2-thiouridylase MnmA 1 (355 aa).

6 to 13 (LLSGGVDS) is a binding site for ATP. The segment at 92–94 (NPD) is interaction with target base in tRNA. Cys-97 (nucleophile) is an active-site residue. A disulfide bridge connects residues Cys-97 and Cys-192. Residue Gly-120 coordinates ATP. Residues 142-144 (KDQ) form an interaction with tRNA region. Cys-192 serves as the catalytic Cysteine persulfide intermediate.

This sequence belongs to the MnmA/TRMU family.

It is found in the cytoplasm. It carries out the reaction S-sulfanyl-L-cysteinyl-[protein] + uridine(34) in tRNA + AH2 + ATP = 2-thiouridine(34) in tRNA + L-cysteinyl-[protein] + A + AMP + diphosphate + H(+). Catalyzes the 2-thiolation of uridine at the wobble position (U34) of tRNA, leading to the formation of s(2)U34. This Bacteroides thetaiotaomicron (strain ATCC 29148 / DSM 2079 / JCM 5827 / CCUG 10774 / NCTC 10582 / VPI-5482 / E50) protein is tRNA-specific 2-thiouridylase MnmA 1.